Here is a 361-residue protein sequence, read N- to C-terminus: Phospho-N-acetylmuramoyl-pentapeptide-transferase (361 aa).

Transmembrane regions (helical) follow at residues 18–38, 73–93, 97–117, 135–155, 168–188, 196–216, 235–255, 263–283, 288–308, and 338–358; these read VFNY…ILVL, TMGG…WGDL, FIWV…MDDY, LLQS…ATTG, VLPN…VGSS, GLDG…GVFA, GAGE…GFLW, VFMG…TAVV, LVYF…ILQV, and KVIV…LATL.

This sequence belongs to the glycosyltransferase 4 family. MraY subfamily. The cofactor is Mg(2+).

Its subcellular location is the cell inner membrane. The enzyme catalyses UDP-N-acetyl-alpha-D-muramoyl-L-alanyl-gamma-D-glutamyl-meso-2,6-diaminopimeloyl-D-alanyl-D-alanine + di-trans,octa-cis-undecaprenyl phosphate = di-trans,octa-cis-undecaprenyl diphospho-N-acetyl-alpha-D-muramoyl-L-alanyl-D-glutamyl-meso-2,6-diaminopimeloyl-D-alanyl-D-alanine + UMP. The protein operates within cell wall biogenesis; peptidoglycan biosynthesis. Its function is as follows. Catalyzes the initial step of the lipid cycle reactions in the biosynthesis of the cell wall peptidoglycan: transfers peptidoglycan precursor phospho-MurNAc-pentapeptide from UDP-MurNAc-pentapeptide onto the lipid carrier undecaprenyl phosphate, yielding undecaprenyl-pyrophosphoryl-MurNAc-pentapeptide, known as lipid I. The protein is Phospho-N-acetylmuramoyl-pentapeptide-transferase of Coxiella burnetii (strain CbuK_Q154) (Coxiella burnetii (strain Q154)).